We begin with the raw amino-acid sequence, 105 residues long: Met repressor (105 aa).

Belongs to the MetJ family. As to quaternary structure, homodimer.

It localises to the cytoplasm. Functionally, this regulatory protein, when combined with SAM (S-adenosylmethionine) represses the expression of the methionine regulon and of enzymes involved in SAM synthesis. In Hamiltonella defensa subsp. Acyrthosiphon pisum (strain 5AT), this protein is Met repressor.